Reading from the N-terminus, the 360-residue chain is DNA replication and repair protein RecF (360 aa).

ATP is bound at residue 30–37 (GHNGSGKT).

It belongs to the RecF family.

The protein resides in the cytoplasm. Its function is as follows. The RecF protein is involved in DNA metabolism; it is required for DNA replication and normal SOS inducibility. RecF binds preferentially to single-stranded, linear DNA. It also seems to bind ATP. This chain is DNA replication and repair protein RecF, found in Shewanella amazonensis (strain ATCC BAA-1098 / SB2B).